Here is a 312-residue protein sequence, read N- to C-terminus: Glycine--tRNA ligase alpha subunit (312 aa).

This sequence belongs to the class-II aminoacyl-tRNA synthetase family. As to quaternary structure, tetramer of two alpha and two beta subunits.

It localises to the cytoplasm. It catalyses the reaction tRNA(Gly) + glycine + ATP = glycyl-tRNA(Gly) + AMP + diphosphate. In Delftia acidovorans (strain DSM 14801 / SPH-1), this protein is Glycine--tRNA ligase alpha subunit.